The primary structure comprises 153 residues: Membrane protein FAM174B (153 aa).

The first 27 residues, 1–27, serve as a signal peptide directing secretion; it reads MSALPPQPPPPLLLLLLALLAAPAALA. Over 28 to 84 the chain is Extracellular; it reads RRAESASASQPEAEHQPPPGPGNATQLGSGMAGGGSSNSSVDAVVTRISSLLRDLPT. The interval 31–67 is disordered; it reads ESASASQPEAEHQPPPGPGNATQLGSGMAGGGSSNSS. N50 carries an N-linked (GlcNAc...) asparagine glycan. A helical membrane pass occupies residues 85–105; that stretch reads LKATVIVACAFSALLIACLLL. The Cytoplasmic portion of the chain corresponds to 106–153; the sequence is RVFRLGKRLKKTRKYDIITTPAERVEMAPLNEEDDEDEDSTVFDIKYR.

The protein belongs to the FAM174 family.

Its subcellular location is the cell membrane. The protein resides in the golgi apparatus. Its function is as follows. Essential for Golgi structural integrity. The polypeptide is Membrane protein FAM174B (Fam174b) (Mus musculus (Mouse)).